The following is a 402-amino-acid chain: Putative epoxide hydrolase AFT8 (402 aa).

It belongs to the peptidase S33 family.

It participates in mycotoxin biosynthesis. Functionally, putative epoxide hydrolase; part of the gene clusters that mediate the biosynthesis of the host-selective toxins (HSTs) AF-toxins responsible for Alternaria black spot of strawberry disease by the strawberry pathotype. AF-toxin I and III are valine derivatives of 2,3-dyhydroxy-isovaleric acid and 2-hydroxy-isovaleric acid respectively, while AF II is an isoleucine derivative of 2-hydroxy-valeric acid. These derivatives are bound to a 9,10-epoxy-8-hydroxy-9-methyl-decatrienoic acid (EDA) moiety. On cellular level, AF-toxins affect plasma membrane of susceptible cells and cause a sudden increase in loss of K(+) after a few minutes of toxin treatment. The aldo-keto reductase AFTS1 catalyzes the conversion of 2-keto-isovaleric acid (2-KIV) to 2-hydroxy-isovaleric acid (2-HIV) by reduction of its ketone to an alcohol. The acyl-CoA ligase AFT1, the hydrolase AFT2 and the enoyl-CoA hydratases AFT3 and AFT6, but also the polyketide synthase AFT9, the acyl-CoA dehydrogenase AFT10, the cytochrome P450 monooxygenase AFT11 and the oxidoreductase AFT12 are all involved in the biosynthesis of the AK-, AF- and ACT-toxin common EDA structural moiety. The exact function of each enzyme, and of additional enzymes identified within the AF-toxin clusters have still to be determined. The chain is Putative epoxide hydrolase AFT8 from Alternaria alternata (Alternaria rot fungus).